We begin with the raw amino-acid sequence, 421 residues long: C2H2 type master regulator of conidiophore development brlA (421 aa).

The segment covering 228–242 (THSPTTPLRSCSIGT) has biased composition (polar residues). Residues 228 to 247 (THSPTTPLRSCSIGTASGPD) are disordered. 2 consecutive C2H2-type zinc fingers follow at residues 309 to 333 (FKCK…MKSH) and 339 to 364 (HVCW…TKTH). Over residues 361–370 (TKTHSKRGGR) the composition is skewed to basic residues. Residues 361-421 (TKTHSKRGGR…REYSVDGLDD (61 aa)) form a disordered region.

It localises to the nucleus. In terms of biological role, brlA, abaA and wetA are pivotal regulators of conidiophore development and conidium maturation. They act individually and together to regulate their own expression and that of numerous other sporulation-specific genes. Binds promoters of target genes at brlA response elements (BREs) containing the conserved sequence 5'-(C/A)(A/G)AGGG(G/A)-3'. The protein is C2H2 type master regulator of conidiophore development brlA of Aspergillus parasiticus (strain ATCC 56775 / NRRL 5862 / SRRC 143 / SU-1).